Here is a 324-residue protein sequence, read N- to C-terminus: Beta-ketoacyl-[acyl-carrier-protein] synthase III (324 aa).

Catalysis depends on residues Cys111 and His251. The segment at 252–256 (QANTR) is ACP-binding. Residue Asn281 is part of the active site.

The protein belongs to the thiolase-like superfamily. FabH family. In terms of assembly, homodimer.

The protein localises to the plastid. The protein resides in the chloroplast. It catalyses the reaction malonyl-[ACP] + acetyl-CoA + H(+) = 3-oxobutanoyl-[ACP] + CO2 + CoA. Its pathway is lipid metabolism; fatty acid biosynthesis. Functionally, catalyzes the condensation reaction of fatty acid synthesis by the addition to an acyl acceptor of two carbons from malonyl-ACP. Catalyzes the first condensation reaction which initiates fatty acid synthesis and may therefore play a role in governing the total rate of fatty acid production. Possesses both acetoacetyl-ACP synthase and acetyl transacylase activities. Its substrate specificity determines the biosynthesis of branched-chain and/or straight-chain of fatty acids. The sequence is that of Beta-ketoacyl-[acyl-carrier-protein] synthase III from Pyropia yezoensis (Susabi-nori).